We begin with the raw amino-acid sequence, 410 residues long: Maintenance of mitochondrial morphology protein 1 (410 aa).

At 1-19 the chain is on the lumenal side; sequence MTPDSCPVRPEPTLSFTQG. The chain crosses the membrane as a helical span at residues 20–40; it reads LIVGQISVVFLIAAFIKFFIF. Residues 41-410 lie on the Cytoplasmic side of the membrane; that stretch reads GDPPSAEETA…PMPGSLAVDD (370 aa). Residues 71–87 show a composition bias toward polar residues; that stretch reads LRTSNQRPGSQQQQSVL. The disordered stretch occupies residues 71 to 98; it reads LRTSNQRPGSQQQQSVLNRKKSSILRSG. The SMP-LTD domain occupies 119-335; sequence QPESLDWFNV…EPRFQEIPLP (217 aa). The interval 380 to 410 is disordered; it reads ARQAAQRDSLRYRRPRADDAFPMPGSLAVDD. Basic and acidic residues predominate over residues 387 to 398; it reads DSLRYRRPRADD.

The protein belongs to the MMM1 family. Homodimer. Component of the ER-mitochondria encounter structure (ERMES) or MDM complex, composed of MMM1, MDM10, MDM12 and MDM34. An MMM1 homodimer associates with one molecule of MDM12 on each side in a pairwise head-to-tail manner, and the SMP-LTD domains of MMM1 and MDM12 generate a continuous hydrophobic tunnel for phospholipid trafficking.

It is found in the endoplasmic reticulum membrane. Its function is as follows. Component of the ERMES/MDM complex, which serves as a molecular tether to connect the endoplasmic reticulum (ER) and mitochondria. Components of this complex are involved in the control of mitochondrial shape and protein biogenesis, and function in nonvesicular lipid trafficking between the ER and mitochondria. The MDM12-MMM1 subcomplex functions in the major beta-barrel assembly pathway that is responsible for biogenesis of all outer membrane beta-barrel proteins, and acts in a late step after the SAM complex. The MDM10-MDM12-MMM1 subcomplex further acts in the TOM40-specific pathway after the action of the MDM12-MMM1 complex. Essential for establishing and maintaining the structure of mitochondria and maintenance of mtDNA nucleoids. This chain is Maintenance of mitochondrial morphology protein 1, found in Pyricularia oryzae (strain 70-15 / ATCC MYA-4617 / FGSC 8958) (Rice blast fungus).